Here is a 291-residue protein sequence, read N- to C-terminus: 33 kDa chaperonin (291 aa).

2 disulfide bridges follow: Cys-235-Cys-237 and Cys-268-Cys-271.

This sequence belongs to the HSP33 family. Post-translationally, under oxidizing conditions two disulfide bonds are formed involving the reactive cysteines. Under reducing conditions zinc is bound to the reactive cysteines and the protein is inactive.

The protein localises to the cytoplasm. Redox regulated molecular chaperone. Protects both thermally unfolding and oxidatively damaged proteins from irreversible aggregation. Plays an important role in the bacterial defense system toward oxidative stress. This Streptococcus agalactiae serotype III (strain NEM316) protein is 33 kDa chaperonin.